We begin with the raw amino-acid sequence, 194 residues long: Orotate phosphoribosyltransferase (194 aa).

5-phospho-alpha-D-ribose 1-diphosphate contacts are provided by residues Lys-98 and 122-130 (EDVLTTGGS). Residues Thr-126 and Arg-154 each contribute to the orotate site.

It belongs to the purine/pyrimidine phosphoribosyltransferase family. PyrE subfamily. In terms of assembly, homodimer. The cofactor is Mg(2+).

It catalyses the reaction orotidine 5'-phosphate + diphosphate = orotate + 5-phospho-alpha-D-ribose 1-diphosphate. Its pathway is pyrimidine metabolism; UMP biosynthesis via de novo pathway; UMP from orotate: step 1/2. Its function is as follows. Catalyzes the transfer of a ribosyl phosphate group from 5-phosphoribose 1-diphosphate to orotate, leading to the formation of orotidine monophosphate (OMP). This is Orotate phosphoribosyltransferase from Deinococcus radiodurans (strain ATCC 13939 / DSM 20539 / JCM 16871 / CCUG 27074 / LMG 4051 / NBRC 15346 / NCIMB 9279 / VKM B-1422 / R1).